Here is an 827-residue protein sequence, read N- to C-terminus: SID1 transmembrane family member 1 (827 aa).

The first 19 residues, 1–19, serve as a signal peptide directing secretion; that stretch reads MRGCLRLALLCALPWLLLA. Over 20–309 the chain is Extracellular; that stretch reads ASPGHPAKSP…SIKESVYVKS (290 aa). Asparagine 57, asparagine 67, asparagine 83, asparagine 136, and asparagine 282 each carry an N-linked (GlcNAc...) asparagine glycan. The helical transmembrane segment at 310 to 330 threads the bilayer; that stretch reads SLFSVFIFLSFYLGCLLVGFV. The Cytoplasmic segment spans residues 331–442; that stretch reads HYLRFQRKSI…DRRIVSKKYK (112 aa). Residues 355–408 form a disordered region; it reads ASHPIAASTPEGSNYGTIDESSSSPGRQMSSSDGGPPGQSDTDSSVEESDFDTM. A compositionally biased stretch (polar residues) spans 364 to 374; that stretch reads PEGSNYGTIDE. The segment covering 375-397 has biased composition (low complexity); sequence SSSSPGRQMSSSDGGPPGQSDTD. A compositionally biased stretch (acidic residues) spans 398–408; it reads SSVEESDFDTM. The helical transmembrane segment at 443–463 threads the bilayer; the sequence is IYFWNIITIAVFYALPVIQLV. Residues 464–494 lie on the Extracellular side of the membrane; that stretch reads ITYQTVVNVTGNQDICYYNFLCAHPLGVLSA. A glycan (N-linked (GlcNAc...) asparagine) is linked at asparagine 471. A helical membrane pass occupies residues 495–515; it reads FNNILSNLGHVLLGFLFLLIV. At 516–541 the chain is on the cytoplasmic side; sequence LRRDILHRRALEAKDIFAVEYGIPKH. A helical membrane pass occupies residues 542–562; the sequence is FGLFYAMGIALMMEGVLSACY. Over 563 to 572 the chain is Extracellular; that stretch reads HVCPNYSNFQ. An N-linked (GlcNAc...) asparagine glycan is attached at asparagine 567. A helical membrane pass occupies residues 573–590; that stretch reads FDTSFMYMIAGLCMLKLY. The Cytoplasmic portion of the chain corresponds to 591–600; that stretch reads QTRHPDINAS. Residues 601–621 traverse the membrane as a helical segment; that stretch reads AYSAYASFAVVIMVTVLGVVF. Residues 622-626 are Extracellular-facing; the sequence is GKNDV. The helical transmembrane segment at 627-647 threads the bilayer; sequence WFWVIFSAIHVLASLALSTQI. Topologically, residues 648-683 are cytoplasmic; that stretch reads YYMGRFKIDLGIFRRAAMVFYTDCIQQCSRPLYMDR. Residues 684-704 traverse the membrane as a helical segment; sequence MVLLVVGNLVNWSFALFGLIY. The Extracellular portion of the chain corresponds to 705–710; it reads RPRDFA. A helical transmembrane segment spans residues 711 to 731; it reads SYMLGIFICNLLLYLAFYIIM. Residues 732–741 lie on the Cytoplasmic side of the membrane; it reads KLRSSEKVLP. Residues 742–762 form a helical membrane-spanning segment; sequence VPLFCIVATAVMWAAALYFFF. Over 763 to 791 the chain is Extracellular; it reads QNLSSWEGTPAESREKNRECILLDFFDDH. Asparagine 764 carries N-linked (GlcNAc...) asparagine glycosylation. Residues 792–812 traverse the membrane as a helical segment; the sequence is DIWHFLSATALFFSFLVLLTL. Topologically, residues 813–827 are cytoplasmic; that stretch reads DDDLDVVRRDQIPVF.

Belongs to the SID1 family.

Its subcellular location is the membrane. Functionally, in vitro binds long double-stranded RNA (dsRNA) (500 and 700 base pairs), but not dsRNA shorter than 300 bp. Not involved in RNA autophagy, a process in which RNA is directly imported into lysosomes in an ATP-dependent manner, and degraded. The polypeptide is SID1 transmembrane family member 1 (SIDT1) (Homo sapiens (Human)).